The chain runs to 131 residues: Leptin receptor overlapping transcript-like 1 (131 aa).

A run of 4 helical transmembrane segments spans residues 7 to 27, 32 to 52, 69 to 89, and 100 to 120; these read LISL…GCAL, QYWP…YCIA, LAIF…VVFA, and ALVL…FLVF.

Belongs to the OB-RGRP/VPS55 family. In terms of assembly, interacts with RAB13.

It localises to the membrane. Negatively regulates growth hormone (GH) receptor cell surface expression in liver. May play a role in liver resistance to GH during periods of reduced nutrient availability. In Rattus norvegicus (Rat), this protein is Leptin receptor overlapping transcript-like 1 (Leprotl1).